The chain runs to 563 residues: Proline--tRNA ligase (563 aa).

This sequence belongs to the class-II aminoacyl-tRNA synthetase family. ProS type 1 subfamily. As to quaternary structure, homodimer.

Its subcellular location is the cytoplasm. It carries out the reaction tRNA(Pro) + L-proline + ATP = L-prolyl-tRNA(Pro) + AMP + diphosphate. In terms of biological role, catalyzes the attachment of proline to tRNA(Pro) in a two-step reaction: proline is first activated by ATP to form Pro-AMP and then transferred to the acceptor end of tRNA(Pro). As ProRS can inadvertently accommodate and process non-cognate amino acids such as alanine and cysteine, to avoid such errors it has two additional distinct editing activities against alanine. One activity is designated as 'pretransfer' editing and involves the tRNA(Pro)-independent hydrolysis of activated Ala-AMP. The other activity is designated 'posttransfer' editing and involves deacylation of mischarged Ala-tRNA(Pro). The misacylated Cys-tRNA(Pro) is not edited by ProRS. In Persephonella marina (strain DSM 14350 / EX-H1), this protein is Proline--tRNA ligase.